Reading from the N-terminus, the 499-residue chain is MEKQYVLAIDQGTTSSRAMLFDRQGKVAGVAQREFGQIFPQPGWVEHNPREIMTSVYTTITELLNNAQIDARAIAGIGITNQRETAVVWDKATGQPIYNAIVWQSRQTKDICAQLKEAGHEQMVRDKTGLLIDAYFSGTKVKWILDHVEGARERAQKGELAFGTIDSWLIWNLTGGKVHVTDYTNASRTMMFNIHTLQWDAELLAMLDVPAQMLPEVRSSSEVYGMTQTQYFYGEQVPIAGIAGDQQAALFGQACFEPGMAKNTYGTGCFMLMNTGDKAVASKAGLLTTIAWGIDGKVEYALEGAIFVAGSVVQWLRDGLRMLGKASDSQAYAERAGDNDGVYIVPAFVGLGAPYWRSDIRGAVFGLTRGTTKEHFVRAAVESMAYQTRDVLTAMQSDSGIELKELRADGGAIANDFMAQFQSDILNVPVLRPEVAETTALGAAYLAGLATGFWSSREEIAKQWAVDRRFEPAMADDKRQALYAGWQQAVEATMGFRIS.

T13 contacts ADP. ATP-binding residues include T13, T14, and S15. Residue T13 coordinates sn-glycerol 3-phosphate. ADP is bound at residue R17. The sn-glycerol 3-phosphate site is built by R83, E84, Y135, and D245. Positions 83, 84, 135, 245, and 246 each coordinate glycerol. ADP-binding residues include T267 and G310. ATP is bound by residues T267, G310, Q314, and G411. ADP-binding residues include G411 and N415.

The protein belongs to the FGGY kinase family.

The enzyme catalyses glycerol + ATP = sn-glycerol 3-phosphate + ADP + H(+). Its pathway is polyol metabolism; glycerol degradation via glycerol kinase pathway; sn-glycerol 3-phosphate from glycerol: step 1/1. Its activity is regulated as follows. Inhibited by fructose 1,6-bisphosphate (FBP). Functionally, key enzyme in the regulation of glycerol uptake and metabolism. Catalyzes the phosphorylation of glycerol to yield sn-glycerol 3-phosphate. The protein is Glycerol kinase of Xanthomonas axonopodis pv. citri (strain 306).